The sequence spans 206 residues: Pro-glucagon (206 aa).

The N-terminal stretch at 1–22 (MKMKSIYFIAGLLLMIVQGSWQ) is a signal peptide. The interval 27–57 (DTEEKSRSFKASQSEPLDESRQLNEVKRHSQ) is disordered. The segment covering 44–54 (DESRQLNEVKR) has biased composition (basic and acidic residues). Residues 86-109 (NGQQGQEDKENDKFPDQLSSNAIS) constitute a propeptide that is removed on maturation. R147 is subject to Arginine amide. 2 propeptides span residues 151–163 (DFPE…EEMG) and 199–206 (RDLLGEYQ).

This sequence belongs to the glucagon family. Proglucagon is post-translationally processed in a tissue-specific manner in pancreatic A cells and intestinal L cells. In pancreatic A cells, the major bioactive hormone is glucagon cleaved by PCSK2/PC2. In the intestinal L cells PCSK1/PC1 liberates GLP-1 and GLP-2. GLP-1 is further N-terminally truncated by post-translational processing in the intestinal L cells resulting in GLP-1(7-37) GLP-1-(7-36)amide.

It is found in the secreted. Functionally, plays a key role in glucose metabolism and homeostasis. Regulates blood glucose by increasing gluconeogenesis and decreasing glycolysis. In terms of biological role, potent stimulator of glucose-dependent insulin release. Plays important roles on gastric motility and the suppression of plasma glucagon levels. May be involved in the suppression of satiety and stimulation of glucose disposal in peripheral tissues, independent of the actions of insulin. Has growth-promoting activities on intestinal epithelium. May also regulate the hypothalamic pituitary axis (HPA) via effects on LH, TSH, CRH, oxytocin, and vasopressin secretion. Increases islet mass through stimulation of islet neogenesis and pancreatic beta cell proliferation. Stimulates intestinal growth and up-regulates villus height in the small intestine, concomitant with increased crypt cell proliferation and decreased enterocyte apoptosis. The gastrointestinal tract, from the stomach to the colon is the principal target for GLP-2 action. Plays a key role in nutrient homeostasis, enhancing nutrient assimilation through enhanced gastrointestinal function, as well as increasing nutrient disposal. Stimulates intestinal glucose transport and decreases mucosal permeability. This chain is Pro-glucagon (GCG), found in Gallus gallus (Chicken).